A 233-amino-acid polypeptide reads, in one-letter code: Ion-translocating oxidoreductase complex subunit E (233 aa).

The next 5 helical transmembrane spans lie at 22-42 (LLGL…LGLG), 69-89 (IPIY…LINA), 93-113 (GLYQ…IVVG), 128-148 (ALDG…LGSI), and 182-202 (PMLL…LLAA).

It belongs to the NqrDE/RnfAE family. In terms of assembly, the complex is composed of six subunits: RnfA, RnfB, RnfC, RnfD, RnfE and RnfG.

It localises to the cell inner membrane. Its function is as follows. Part of a membrane-bound complex that couples electron transfer with translocation of ions across the membrane. This chain is Ion-translocating oxidoreductase complex subunit E, found in Erwinia tasmaniensis (strain DSM 17950 / CFBP 7177 / CIP 109463 / NCPPB 4357 / Et1/99).